Reading from the N-terminus, the 408-residue chain is Multifunctional CCA protein (408 aa).

2 residues coordinate ATP: G8 and R11. CTP is bound by residues G8 and R11. The Mg(2+) site is built by D21 and D23. Residues R91, R137, and R140 each coordinate ATP. The CTP site is built by R91, R137, and R140. The HD domain maps to 228–329; it reads SGVHTLMVLE…VKLFDKADFW (102 aa).

The protein belongs to the tRNA nucleotidyltransferase/poly(A) polymerase family. Bacterial CCA-adding enzyme type 1 subfamily. Monomer. Can also form homodimers and oligomers. Requires Mg(2+) as cofactor. Ni(2+) is required as a cofactor.

It carries out the reaction a tRNA precursor + 2 CTP + ATP = a tRNA with a 3' CCA end + 3 diphosphate. The catalysed reaction is a tRNA with a 3' CCA end + 2 CTP + ATP = a tRNA with a 3' CCACCA end + 3 diphosphate. Functionally, catalyzes the addition and repair of the essential 3'-terminal CCA sequence in tRNAs without using a nucleic acid template. Adds these three nucleotides in the order of C, C, and A to the tRNA nucleotide-73, using CTP and ATP as substrates and producing inorganic pyrophosphate. tRNA 3'-terminal CCA addition is required both for tRNA processing and repair. Also involved in tRNA surveillance by mediating tandem CCA addition to generate a CCACCA at the 3' terminus of unstable tRNAs. While stable tRNAs receive only 3'-terminal CCA, unstable tRNAs are marked with CCACCA and rapidly degraded. This chain is Multifunctional CCA protein, found in Shewanella piezotolerans (strain WP3 / JCM 13877).